The following is a 479-amino-acid chain: Aspartyl/glutamyl-tRNA(Asn/Gln) amidotransferase subunit B (479 aa).

It belongs to the GatB/GatE family. GatB subfamily. As to quaternary structure, heterotrimer of A, B and C subunits.

The catalysed reaction is L-glutamyl-tRNA(Gln) + L-glutamine + ATP + H2O = L-glutaminyl-tRNA(Gln) + L-glutamate + ADP + phosphate + H(+). It carries out the reaction L-aspartyl-tRNA(Asn) + L-glutamine + ATP + H2O = L-asparaginyl-tRNA(Asn) + L-glutamate + ADP + phosphate + 2 H(+). Functionally, allows the formation of correctly charged Asn-tRNA(Asn) or Gln-tRNA(Gln) through the transamidation of misacylated Asp-tRNA(Asn) or Glu-tRNA(Gln) in organisms which lack either or both of asparaginyl-tRNA or glutaminyl-tRNA synthetases. The reaction takes place in the presence of glutamine and ATP through an activated phospho-Asp-tRNA(Asn) or phospho-Glu-tRNA(Gln). The sequence is that of Aspartyl/glutamyl-tRNA(Asn/Gln) amidotransferase subunit B from Streptococcus pyogenes serotype M49 (strain NZ131).